The primary structure comprises 585 residues: Zinc finger protein C11D3.17 (585 aa).

2 C2H2-type zinc fingers span residues 31–53 (FPCD…KACH) and 59–82 (IPCP…QRFH). Thr553 bears the Phosphothreonine mark.

The protein localises to the nucleus. The sequence is that of Zinc finger protein C11D3.17 from Schizosaccharomyces pombe (strain 972 / ATCC 24843) (Fission yeast).